Consider the following 195-residue polypeptide: Pyridoxal 5'-phosphate synthase subunit PdxT (195 aa).

An L-glutamine-binding site is contributed by 53-55 (GES). The Nucleophile role is filled by C82. L-glutamine-binding positions include R108 and 134-135 (IR). Active-site charge relay system residues include H173 and E175.

This sequence belongs to the glutaminase PdxT/SNO family. In the presence of PdxS, forms a dodecamer of heterodimers. Only shows activity in the heterodimer.

The catalysed reaction is aldehydo-D-ribose 5-phosphate + D-glyceraldehyde 3-phosphate + L-glutamine = pyridoxal 5'-phosphate + L-glutamate + phosphate + 3 H2O + H(+). It catalyses the reaction L-glutamine + H2O = L-glutamate + NH4(+). It functions in the pathway cofactor biosynthesis; pyridoxal 5'-phosphate biosynthesis. In terms of biological role, catalyzes the hydrolysis of glutamine to glutamate and ammonia as part of the biosynthesis of pyridoxal 5'-phosphate. The resulting ammonia molecule is channeled to the active site of PdxS. This is Pyridoxal 5'-phosphate synthase subunit PdxT from Methanobrevibacter smithii (strain ATCC 35061 / DSM 861 / OCM 144 / PS).